A 507-amino-acid polypeptide reads, in one-letter code: Histidine ammonia-lyase (507 aa).

Residues 140 to 142 constitute a cross-link (5-imidazolinone (Ala-Gly)); that stretch reads ASG. 2,3-didehydroalanine (Ser) is present on Ser141.

The protein belongs to the PAL/histidase family. Contains an active site 4-methylidene-imidazol-5-one (MIO), which is formed autocatalytically by cyclization and dehydration of residues Ala-Ser-Gly.

The protein resides in the cytoplasm. The catalysed reaction is L-histidine = trans-urocanate + NH4(+). Its pathway is amino-acid degradation; L-histidine degradation into L-glutamate; N-formimidoyl-L-glutamate from L-histidine: step 1/3. The chain is Histidine ammonia-lyase from Yersinia enterocolitica serotype O:8 / biotype 1B (strain NCTC 13174 / 8081).